We begin with the raw amino-acid sequence, 279 residues long: MPDNTREGSSARFVDGAIPAGLLAAVRSQRPLVHHITNGVTINDCANITICAGAAPVMAEAPEEVAGMVAAAGALVLNIGTLSAAQVEAMLIAGRRANELGIPVVLDPVGVGATEFRTATARKLLDTLDIAVLKGNAGEIGVLAGTGGSVRGVDSGGVAGDPVETARECARSTGTVVSMTGAVDVVTDGSRVFLVGNGNPAMDRLSGTGCMASSVTAAFVAVAEDYAVASAAALAAFGLAGEWGAAGARGPYTFRTALFDELAGLSPDDLAGHARIEER.

M58 contacts substrate. ATP-binding residues include K134 and T180. G207 is a binding site for substrate.

The protein belongs to the Thz kinase family. Mg(2+) is required as a cofactor.

It carries out the reaction 5-(2-hydroxyethyl)-4-methylthiazole + ATP = 4-methyl-5-(2-phosphooxyethyl)-thiazole + ADP + H(+). It functions in the pathway cofactor biosynthesis; thiamine diphosphate biosynthesis; 4-methyl-5-(2-phosphoethyl)-thiazole from 5-(2-hydroxyethyl)-4-methylthiazole: step 1/1. Catalyzes the phosphorylation of the hydroxyl group of 4-methyl-5-beta-hydroxyethylthiazole (THZ). This is Hydroxyethylthiazole kinase from Methanoculleus marisnigri (strain ATCC 35101 / DSM 1498 / JR1).